Here is a 251-residue protein sequence, read N- to C-terminus: Mast cell protease 3 (251 aa).

The N-terminal stretch at 1–17 (MVLFLLLVALLSPAGEA) is a signal peptide. Positions 18-19 (GK) are cleaved as a propeptide — activation peptide. Residues 20 to 243 (IIGGHEAKPH…FLSWIQRTMR (224 aa)) form the Peptidase S1 domain. Cysteines 48 and 64 form a disulfide. Histidine 63 serves as the catalytic Charge relay system. N-linked (GlcNAc...) asparagine glycosylation occurs at asparagine 70. Catalysis depends on aspartate 107, which acts as the Charge relay system. Disulfide bonds link cysteine 141–cysteine 207 and cysteine 172–cysteine 186. Serine 201 serves as the catalytic Charge relay system.

The protein belongs to the peptidase S1 family. Granzyme subfamily.

The protein resides in the secreted. The protein localises to the cytoplasmic granule. The polypeptide is Mast cell protease 3 (Ovis aries (Sheep)).